A 190-amino-acid chain; its full sequence is Holliday junction branch migration complex subunit RuvA (190 aa).

Residues 1–64 (MIGKLSGTLD…EDAQILYGFA (64 aa)) form a domain I region. Residues 65–137 (TSQERAAFRE…LKGKLGPDIG (73 aa)) are domain II. The flexible linker stretch occupies residues 137 to 141 (GVAAS). The segment at 142-190 (VANDSQADILQALLALGYSDKEAAAALKALPSDVGVSEGIRLALRALGK) is domain III.

Belongs to the RuvA family. As to quaternary structure, homotetramer. Forms an RuvA(8)-RuvB(12)-Holliday junction (HJ) complex. HJ DNA is sandwiched between 2 RuvA tetramers; dsDNA enters through RuvA and exits via RuvB. An RuvB hexamer assembles on each DNA strand where it exits the tetramer. Each RuvB hexamer is contacted by two RuvA subunits (via domain III) on 2 adjacent RuvB subunits; this complex drives branch migration. In the full resolvosome a probable DNA-RuvA(4)-RuvB(12)-RuvC(2) complex forms which resolves the HJ.

The protein resides in the cytoplasm. In terms of biological role, the RuvA-RuvB-RuvC complex processes Holliday junction (HJ) DNA during genetic recombination and DNA repair, while the RuvA-RuvB complex plays an important role in the rescue of blocked DNA replication forks via replication fork reversal (RFR). RuvA specifically binds to HJ cruciform DNA, conferring on it an open structure. The RuvB hexamer acts as an ATP-dependent pump, pulling dsDNA into and through the RuvAB complex. HJ branch migration allows RuvC to scan DNA until it finds its consensus sequence, where it cleaves and resolves the cruciform DNA. This is Holliday junction branch migration complex subunit RuvA from Albidiferax ferrireducens (strain ATCC BAA-621 / DSM 15236 / T118) (Rhodoferax ferrireducens).